Reading from the N-terminus, the 377-residue chain is uncharacterized protein (377 aa).

The stretch at asparagine 309–lysine 375 forms a coiled coil.

Belongs to the mimivirus L5 family.

This is an uncharacterized protein from Acanthamoeba polyphaga (Amoeba).